Consider the following 103-residue polypeptide: uncharacterized protein (103 aa).

The chain crosses the membrane as a helical span at residues 33-57 (GYVAAIVAGPVSMSPLDWICPLLAI).

It is found in the membrane. This is an uncharacterized protein from Sinorhizobium fredii (strain NBRC 101917 / NGR234).